Consider the following 236-residue polypeptide: Phosphoribosylaminoimidazole-succinocarboxamide synthase (236 aa).

The protein belongs to the SAICAR synthetase family.

The enzyme catalyses 5-amino-1-(5-phospho-D-ribosyl)imidazole-4-carboxylate + L-aspartate + ATP = (2S)-2-[5-amino-1-(5-phospho-beta-D-ribosyl)imidazole-4-carboxamido]succinate + ADP + phosphate + 2 H(+). The protein operates within purine metabolism; IMP biosynthesis via de novo pathway; 5-amino-1-(5-phospho-D-ribosyl)imidazole-4-carboxamide from 5-amino-1-(5-phospho-D-ribosyl)imidazole-4-carboxylate: step 1/2. The sequence is that of Phosphoribosylaminoimidazole-succinocarboxamide synthase from Campylobacter jejuni subsp. jejuni serotype O:2 (strain ATCC 700819 / NCTC 11168).